We begin with the raw amino-acid sequence, 185 residues long: MELVVQSRETDKKSVIKKIRQQGGIPAVLYSGGKSLANIVVDARVFSKFLSTLESGALASTVFTLSYEGREIKALVKDIQYHVTTYDVIHLDFEELVDGRDVRLNIPIRCINTVDCVGVKLGGSLRQVIRCIRVVCKPKDIVPFLELDVQSLGLSQTLKLSDICIPEGIRPVTSLKEVAVTVARR.

Belongs to the bacterial ribosomal protein bL25 family. CTC subfamily. Part of the 50S ribosomal subunit; part of the 5S rRNA/L5/L18/L25 subcomplex. Contacts the 5S rRNA. Binds to the 5S rRNA independently of L5 and L18.

In terms of biological role, this is one of the proteins that binds to the 5S RNA in the ribosome where it forms part of the central protuberance. The polypeptide is Large ribosomal subunit protein bL25 (Chlamydia trachomatis serovar D (strain ATCC VR-885 / DSM 19411 / UW-3/Cx)).